The chain runs to 299 residues: Taste receptor type 2 member 5 (299 aa).

Residue Met-1 is a topological domain, extracellular. Residues 2–22 form a helical membrane-spanning segment; the sequence is LSAGLGLLMLVAVIEFLIGLI. The Cytoplasmic portion of the chain corresponds to 23-45; the sequence is GNGILVVWSLREWIRKFSWSSYN. A helical transmembrane segment spans residues 46 to 66; that stretch reads LIILGLAGCRFLLQWLIILDL. Residues 67 to 82 lie on the Extracellular side of the membrane; that stretch reads SLFPLFQSSSWLRYLN. Residues 83–103 traverse the membrane as a helical segment; sequence VFWVLVSQASLWFATFLSVFY. Over 104–127 the chain is Cytoplasmic; it reads CKKITTFDRPAYLWLKQRAYNLSL. Residues 128 to 148 traverse the membrane as a helical segment; the sequence is WCLLGYFIISLLLTVQVGLTV. At 149-175 the chain is on the extracellular side; that stretch reads HHPPQGNSSIRYPFEHWQYLYVFQLNS. Residue Asn-155 is glycosylated (N-linked (GlcNAc...) asparagine). A helical membrane pass occupies residues 176 to 196; sequence GSYLPLMVFLVSSGMLIISLY. The Cytoplasmic segment spans residues 197–223; the sequence is THHKKMKVHSAGRRDARAKAHITALKS. The chain crosses the membrane as a helical span at residues 224 to 244; that stretch reads LGCFLLLHLVYIVASPFSITS. Over 245 to 253 the chain is Extracellular; that stretch reads KTYPPDLTS. Residues 254-274 traverse the membrane as a helical segment; it reads VFIWETLMAAYPSLHSLMLIM. The Cytoplasmic portion of the chain corresponds to 275-299; the sequence is GIPRVKQTCQKILWKTVCARRCWGP.

It belongs to the G-protein coupled receptor T2R family.

It localises to the membrane. In terms of biological role, receptor that may play a role in the perception of bitterness and is gustducin-linked. May play a role in sensing the chemical composition of the gastrointestinal content. The activity of this receptor may stimulate alpha gustducin, mediate PLC-beta-2 activation and lead to the gating of TRPM5. The sequence is that of Taste receptor type 2 member 5 (TAS2R5) from Papio hamadryas (Hamadryas baboon).